The primary structure comprises 351 residues: Glycerol-1-phosphate dehydrogenase [NAD(P)+] (351 aa).

Residues 97 to 101 (GKVID) and 119 to 122 (TSPS) each bind NAD(+). Asp-124 is a substrate binding site. Residue Ser-128 participates in NAD(+) binding. A substrate-binding site is contributed by Asp-171. Asp-171 and His-251 together coordinate Zn(2+). His-255 provides a ligand contact to substrate. His-267 contacts Zn(2+).

Belongs to the glycerol-1-phosphate dehydrogenase family. As to quaternary structure, homodimer. The cofactor is Zn(2+).

The protein resides in the cytoplasm. It catalyses the reaction sn-glycerol 1-phosphate + NAD(+) = dihydroxyacetone phosphate + NADH + H(+). The catalysed reaction is sn-glycerol 1-phosphate + NADP(+) = dihydroxyacetone phosphate + NADPH + H(+). It functions in the pathway membrane lipid metabolism; glycerophospholipid metabolism. Functionally, catalyzes the NAD(P)H-dependent reduction of dihydroxyacetonephosphate (DHAP or glycerone phosphate) to glycerol 1-phosphate (G1P). The G1P thus generated is used as the glycerophosphate backbone of phospholipids in the cellular membranes of Archaea. The polypeptide is Glycerol-1-phosphate dehydrogenase [NAD(P)+] (Saccharolobus islandicus (strain M.16.27) (Sulfolobus islandicus)).